We begin with the raw amino-acid sequence, 352 residues long: 3-isopropylmalate dehydrogenase (352 aa).

Position 71-87 (71-87 (GAHDSAWNQLPRHLRPE)) interacts with NAD(+). Positions 94, 104, 132, and 218 each coordinate substrate. The Mg(2+) site is built by Asp218, Asp242, and Asp246. Residue 275-287 (GSAPDIAGQGVAN) participates in NAD(+) binding.

This sequence belongs to the isocitrate and isopropylmalate dehydrogenases family. LeuB type 1 subfamily. In terms of assembly, homodimer. Mg(2+) is required as a cofactor. Mn(2+) serves as cofactor.

The protein localises to the cytoplasm. It catalyses the reaction (2R,3S)-3-isopropylmalate + NAD(+) = 4-methyl-2-oxopentanoate + CO2 + NADH. It participates in amino-acid biosynthesis; L-leucine biosynthesis; L-leucine from 3-methyl-2-oxobutanoate: step 3/4. Catalyzes the oxidation of 3-carboxy-2-hydroxy-4-methylpentanoate (3-isopropylmalate) to 3-carboxy-4-methyl-2-oxopentanoate. The product decarboxylates to 4-methyl-2 oxopentanoate. The sequence is that of 3-isopropylmalate dehydrogenase from Deinococcus radiodurans (strain ATCC 13939 / DSM 20539 / JCM 16871 / CCUG 27074 / LMG 4051 / NBRC 15346 / NCIMB 9279 / VKM B-1422 / R1).